Here is a 336-residue protein sequence, read N- to C-terminus: tRNA(Ile)-lysidine synthase (336 aa).

An ATP-binding site is contributed by Ser-32–Ser-37.

The protein belongs to the tRNA(Ile)-lysidine synthase family.

It is found in the cytoplasm. It catalyses the reaction cytidine(34) in tRNA(Ile2) + L-lysine + ATP = lysidine(34) in tRNA(Ile2) + AMP + diphosphate + H(+). Its function is as follows. Ligates lysine onto the cytidine present at position 34 of the AUA codon-specific tRNA(Ile) that contains the anticodon CAU, in an ATP-dependent manner. Cytidine is converted to lysidine, thus changing the amino acid specificity of the tRNA from methionine to isoleucine. The polypeptide is tRNA(Ile)-lysidine synthase (Synechococcus sp. (strain JA-3-3Ab) (Cyanobacteria bacterium Yellowstone A-Prime)).